The chain runs to 540 residues: Ecdysone 20-monooxygenase (540 aa).

Cysteine 488 provides a ligand contact to heme.

This sequence belongs to the cytochrome P450 family. Heme serves as cofactor. In terms of tissue distribution, strong expression by embryonic stage 10 in epidermis, decreases significantly in older embryos. Third instar larvae show expression in the midgut copper cells, Malpighian tubules and fat body. In the adult ovaries, expression is seen in both nurse cells and centripetally migrating follicle cells.

It localises to the mitochondrion membrane. The enzyme catalyses ecdysone + AH2 + O2 = 20-hydroxyecdysone + A + H2O. It functions in the pathway steroid biosynthesis; ecdysteroid biosynthesis. In terms of biological role, required for CNS development; midline glial cells. Involved in the metabolism of insect hormones; responsible for all ecdysone 20-monooxygenase activity during embryonic, larval and adult stages. May be involved in the breakdown of synthetic insecticides. This chain is Ecdysone 20-monooxygenase (shd), found in Drosophila melanogaster (Fruit fly).